A 78-amino-acid chain; its full sequence is Large ribosomal subunit protein bL28 (78 aa).

This sequence belongs to the bacterial ribosomal protein bL28 family.

This is Large ribosomal subunit protein bL28 from Acidithiobacillus ferrooxidans (strain ATCC 23270 / DSM 14882 / CIP 104768 / NCIMB 8455) (Ferrobacillus ferrooxidans (strain ATCC 23270)).